A 1118-amino-acid chain; its full sequence is MKKANRSAGSVPKVSGISKPQTVEKSKPENSSSAPTGVKPVRPGAAAALSKTKSNDDLLAGMAGGVNVTNGIKAKKSTCSSAAPSAPAPAMTISENKSKISTGTSSSAKRSTSAGNKESSSTRERLRERTRLNQSKKLPSVSQGANDVALAKRSRSRTAAEGDIRMSKSKSDNQISDKAALEAKVKDLLTLAKTKDVEILHLRNELRDMRAQLGISEDHCEGEDRSEVKETIIAHQPTDVESTLLQLQEQNTAIREELNQLKNENRMLKDRLNALGFSLEQRLDNSEKLFGYQSLSPEITPGNQSDGGGTLTSSVEGSAPGSVEDLLSQDENTLMDHQHSNSMDNLDSECSEVYQPLTSSDDALDAPSSSESEGVPSIERSRKGSSGNASEVSVACLTERIHQMEENQHSTSEELQATLQELADLQQITQELNSENERLGEEKVILMESLCQQSDKLEHFGRQIEYFRSLLDEHHISYVIDEDVKSGRYMELEQRYMDLAENARFEREQLLGVQQHLSNTLKMAEQDNKEAQEMIGALKERSHHMERIIESEQKGKAALAATLEEYKATVASDQIEMNRLKAQLENEKQKVAELYSIHNSGDKSDIQDLLESVRLDKEKAETLASSLQEDLAHTRNDANRLQDTIAKVEDEYRAFQEEAKKQIEDLNMTLEKLRSELEEKDTERSDMKETIFELEDEVEQHRAVKLHDNLIISDLENTVKKLQDQKHDMEREIKTLHRRLREESAEWRQFQADLQTAVVIANDIKSEAQEEIGDLKRRLHEAQEKNEKLTKELEEIKSRKQEEERGRVYNYMNAVERDLAALRQGMGLSRRSSTSSEPTPTVKTLIKSFDSASQVPNAAAAAIPRTPLSPSPMKTPPAAAVSPMQRHSISGPISTSKPLTALSDKRSNYGELPVQEHLLRTSSTSRPASLPRVPAMESAKTISVSRRSSEEMKRDISASEGASPASLMAMGTTSPQLSLSSSPTASVTPSTRSRIREERKDPLSALAREYGGSKRNALLKWCQKKTEGYQNIDITNFSSSWNDGLAFCALLHTYLPAHIPYQELNSQDKKRNFTLAFQAAESVGIKSTLDINEMARTERPDWQNVMLYVTAIYKYFET.

4 disordered regions span residues 1 to 63, 75 to 176, 294 to 324, and 359 to 391; these read MKKA…AGMA, KKST…NQIS, SLSPEITPGNQSDGGGTLTSSVEGSAPGSVE, and SSDDALDAPSSSESEGVPSIERSRKGSSGNASE. The span at 80-90 shows a compositional bias: low complexity; sequence SSAAPSAPAPA. The span at 93-117 shows a compositional bias: polar residues; the sequence is ISENKSKISTGTSSSAKRSTSAGNK. Positions 120–131 are enriched in basic and acidic residues; sequence SSTRERLRERTR. Over residues 133-145 the composition is skewed to polar residues; sequence NQSKKLPSVSQGA. A compositionally biased stretch (basic and acidic residues) spans 158–171; sequence TAAEGDIRMSKSKS. Positions 168-281 form a coiled coil; that stretch reads KSKSDNQISD…LNALGFSLEQ (114 aa). Residues 294–304 show a composition bias toward polar residues; that stretch reads SLSPEITPGNQ. The segment covering 359-373 has biased composition (low complexity); the sequence is SSDDALDAPSSSESE. 3 positions are modified to phosphoserine: serine 385, serine 386, and serine 390. 2 coiled-coil regions span residues 395 to 450 and 488 to 808; these read ACLT…MESL and RYME…RGRV. A phosphoserine mark is found at serine 869, serine 882, and serine 888. The tract at residues 921–999 is disordered; it reads TSSTSRPASL…STRSRIREER (79 aa). Over residues 947 to 957 the composition is skewed to basic and acidic residues; that stretch reads RSSEEMKRDIS. A compositionally biased stretch (low complexity) spans 972-992; the sequence is TTSPQLSLSSSPTASVTPSTR. The Calponin-homology (CH) domain occupies 1012 to 1117; the sequence is GSKRNALLKW…YVTAIYKYFE (106 aa).

The protein belongs to the cytospin-A family. As to quaternary structure, may interact with both microtubules and actin cytoskeleton.

It is found in the cytoplasm. It localises to the cytoskeleton. Its subcellular location is the spindle. The protein localises to the cell junction. The protein resides in the gap junction. In terms of biological role, involved in cytokinesis and spindle organization. May play a role in actin cytoskeleton organization and microtubule stabilization and hence required for proper cell adhesion and migration. This Mus musculus (Mouse) protein is Cytospin-A (Specc1l).